Here is a 630-residue protein sequence, read N- to C-terminus: Zinc finger protein MSN4 (630 aa).

Methionine 1 is modified (N-acetylmethionine). The segment covering 37–56 (TTNVSATSSNDNSANNSISS) has biased composition (low complexity). 2 disordered regions span residues 37–77 (TTNV…ATNT) and 115–137 (FVND…DKIY). Serine 178 carries the post-translational modification Phosphoserine. The 9aaTAD signature appears at 237-245 (SILEDFVSS). Residue serine 263 is modified to Phosphoserine. Polar residues predominate over residues 292–303 (KNSSNSKPTQQI). Disordered stretches follow at residues 292–322 (KNSS…SPTT) and 360–379 (SISS…RQQR). Serine 316 and serine 319 each carry phosphoserine. Residues 360-373 (SISSSLNRISHSSS) show a composition bias toward low complexity. Threonine 479 is modified (phosphothreonine). The tract at residues 502–566 (TSQAHHAAQH…KSITTIDPNN (65 aa)) is disordered. The segment covering 504-515 (QAHHAAQHHQQQ) has biased composition (low complexity). Polar residues-rich tracts occupy residues 516–525 (PTKQATVSPN) and 532–547 (SSVT…NNNG). Serine 558 is subject to Phosphoserine. 2 consecutive C2H2-type zinc fingers follow at residues 573–596 (FKCK…RSVH) and 602–624 (FACM…LKTH).

It localises to the cytoplasm. The protein resides in the nucleus. In terms of biological role, positive transcriptional factor that acts as a component of the stress responsive system. Recognizes and binds to the stress response element (STRE) which is involved in the response to various forms of stress (heat, oxidative, osmotic, etc.). Involved in the regulation of the CTT1, DDR2, HSP12 genes. This Saccharomyces cerevisiae (strain ATCC 204508 / S288c) (Baker's yeast) protein is Zinc finger protein MSN4 (MSN4).